The following is a 443-amino-acid chain: Serine/threonine-protein phosphatase 2A 55 kDa regulatory subunit B beta isoform (443 aa).

WD repeat units follow at residues threonine 22–valine 61, glutamate 87–glutamate 128, alanine 171–asparagine 209, and glutamate 220–arginine 260. Serine 275 carries the post-translational modification Phosphoserine. WD repeat units follow at residues glutamate 279–glutamate 317, glutamate 334–leucine 375, and aspartate 410–valine 442. At tyrosine 295 the chain carries Phosphotyrosine. Position 298 is a phosphothreonine (threonine 298).

The protein belongs to the phosphatase 2A regulatory subunit B family. As to quaternary structure, PP2A consists of a common heterodimeric core enzyme, composed of a 36 kDa catalytic subunit (subunit C) and a 65 kDa constant regulatory subunit (PR65 or subunit A), that associates with a variety of regulatory subunits. Proteins that associate with the core dimer include three families of regulatory subunits B (the R2/B/PR55/B55, R3/B''/PR72/PR130/PR59 and R5/B'/B56 families), the 48 kDa variable regulatory subunit, viral proteins, and cell signaling molecules. Interacts with TOMM22. Interacts with IER5 (via N- and C-terminal regions).

The protein localises to the cytoplasm. The protein resides in the cytoskeleton. It is found in the membrane. The B regulatory subunit might modulate substrate selectivity and catalytic activity, and might also direct the localization of the catalytic enzyme to a particular subcellular compartment. The sequence is that of Serine/threonine-protein phosphatase 2A 55 kDa regulatory subunit B beta isoform (PPP2R2B) from Bos taurus (Bovine).